We begin with the raw amino-acid sequence, 89 residues long: Small ribosomal subunit protein uS15 (89 aa).

The disordered stretch occupies residues 1–25; that stretch reads MSLDTTEKQQLINTHQTHGTDTGSA. Residues 8 to 25 are compositionally biased toward polar residues; that stretch reads KQQLINTHQTHGTDTGSA.

The protein belongs to the universal ribosomal protein uS15 family. As to quaternary structure, part of the 30S ribosomal subunit. Forms a bridge to the 50S subunit in the 70S ribosome, contacting the 23S rRNA.

Functionally, one of the primary rRNA binding proteins, it binds directly to 16S rRNA where it helps nucleate assembly of the platform of the 30S subunit by binding and bridging several RNA helices of the 16S rRNA. Forms an intersubunit bridge (bridge B4) with the 23S rRNA of the 50S subunit in the ribosome. The chain is Small ribosomal subunit protein uS15 from Parasynechococcus marenigrum (strain WH8102).